The following is a 492-amino-acid chain: N-succinylglutamate 5-semialdehyde dehydrogenase (492 aa).

220–225 contacts NAD(+); that stretch reads GSANTG. Active-site residues include Glu-243 and Cys-277.

It belongs to the aldehyde dehydrogenase family. AstD subfamily.

The enzyme catalyses N-succinyl-L-glutamate 5-semialdehyde + NAD(+) + H2O = N-succinyl-L-glutamate + NADH + 2 H(+). The protein operates within amino-acid degradation; L-arginine degradation via AST pathway; L-glutamate and succinate from L-arginine: step 4/5. Functionally, catalyzes the NAD-dependent reduction of succinylglutamate semialdehyde into succinylglutamate. The protein is N-succinylglutamate 5-semialdehyde dehydrogenase of Escherichia coli O81 (strain ED1a).